The following is a 123-amino-acid chain: Large ribosomal subunit protein uL24 (123 aa).

Belongs to the universal ribosomal protein uL24 family. As to quaternary structure, part of the 50S ribosomal subunit.

Its function is as follows. One of two assembly initiator proteins, it binds directly to the 5'-end of the 23S rRNA, where it nucleates assembly of the 50S subunit. Functionally, located at the polypeptide exit tunnel on the outside of the subunit. The chain is Large ribosomal subunit protein uL24 from Pyrobaculum aerophilum (strain ATCC 51768 / DSM 7523 / JCM 9630 / CIP 104966 / NBRC 100827 / IM2).